Here is an 88-residue protein sequence, read N- to C-terminus: Small ribosomal subunit protein bS20 (88 aa).

The interval 1-20 (MANHKSAEKRARQTIKRTER) is disordered.

The protein belongs to the bacterial ribosomal protein bS20 family.

Its function is as follows. Binds directly to 16S ribosomal RNA. This is Small ribosomal subunit protein bS20 from Campylobacter fetus subsp. fetus (strain 82-40).